Consider the following 609-residue polypeptide: Wee1-like protein kinase (609 aa).

Residues 1–10 (MAFRQSEHEM) show a composition bias toward basic and acidic residues. Disordered regions lie at residues 1 to 88 (MAFR…SMSP) and 147 to 166 (PLHN…PFTP). Ser23, Ser25, and Ser27 each carry phosphoserine. Positions 37 to 48 (RFADDDFDKDTP) are enriched in basic and acidic residues. Thr47 is subject to Phosphothreonine. Ser52 carries the phosphoserine modification. A compositionally biased stretch (polar residues) spans 153–165 (LPTQDTANVNPFT). A Phosphothreonine modification is found at Thr165. The residue at position 168 (Ser168) is a Phosphoserine. The region spanning 239–517 (FMQVNVIGVG…SQSIFSHPIL (279 aa)) is the Protein kinase domain. ATP is bound by residues 245–253 (IGVGEFGVV) and Lys268. Asp361 (proton acceptor) is an active-site residue. Residues Asn366 and Asp412 each contribute to the Mg(2+) site.

Belongs to the protein kinase superfamily. Ser/Thr protein kinase family. WEE1 subfamily. Mg(2+) serves as cofactor. Phosphorylated during M and G1 phases. As to expression, expressed in embryos; expression remains high in the proliferating cells of the central nervous system well after cells in the rest of the embryo have ceased dividing.

It is found in the nucleus. The catalysed reaction is L-tyrosyl-[protein] + ATP = O-phospho-L-tyrosyl-[protein] + ADP + H(+). Its activity is regulated as follows. Negatively regulated by phosphorylation in the M-phase. Functionally, acts as a negative regulator of entry into mitosis (G2 to M transition). This kinase specifically phosphorylates and inactivates cyclin B1-complexed CDC2. The sequence is that of Wee1-like protein kinase from Drosophila melanogaster (Fruit fly).